Reading from the N-terminus, the 347-residue chain is GMP reductase (347 aa).

NADP(+) is bound at residue 108–131 (ADFQKTKDIMALTDDLIFICIDIA). Positions 181 and 183 each coordinate K(+). The active-site Thioimidate intermediate is the C186. Residue 216-239 (IIGDGGCSCAGDVSKAFGGGADFV) coordinates NADP(+).

It belongs to the IMPDH/GMPR family. GuaC type 1 subfamily. Homotetramer.

The enzyme catalyses IMP + NH4(+) + NADP(+) = GMP + NADPH + 2 H(+). In terms of biological role, catalyzes the irreversible NADPH-dependent deamination of GMP to IMP. It functions in the conversion of nucleobase, nucleoside and nucleotide derivatives of G to A nucleotides, and in maintaining the intracellular balance of A and G nucleotides. The chain is GMP reductase from Aliivibrio fischeri (strain ATCC 700601 / ES114) (Vibrio fischeri).